Consider the following 86-residue polypeptide: DNA-directed RNA polymerase subunit Rpo6 (86 aa).

It belongs to the archaeal Rpo6/eukaryotic RPB6 RNA polymerase subunit family. In terms of assembly, part of the RNA polymerase complex.

It localises to the cytoplasm. It carries out the reaction RNA(n) + a ribonucleoside 5'-triphosphate = RNA(n+1) + diphosphate. DNA-dependent RNA polymerase (RNAP) catalyzes the transcription of DNA into RNA using the four ribonucleoside triphosphates as substrates. The protein is DNA-directed RNA polymerase subunit Rpo6 of Sulfurisphaera tokodaii (strain DSM 16993 / JCM 10545 / NBRC 100140 / 7) (Sulfolobus tokodaii).